We begin with the raw amino-acid sequence, 151 residues long: MITIEDFKIKHTNKVRFIGLDLGSKRIGVSICDERQSIATPFKTINKTNTNELIDELKIIIKDNNIGGIIVGNPVNMDGSLGRSAQSVNDVASNISKSIDLPVILWDERLSTVGAFNLSSLLDVNVSKRVKTIDQNAAAFILQGAIDFLNN.

This sequence belongs to the YqgF nuclease family.

The protein localises to the cytoplasm. Could be a nuclease involved in processing of the 5'-end of pre-16S rRNA. This chain is Putative pre-16S rRNA nuclease, found in Pelagibacter ubique (strain HTCC1062).